A 397-amino-acid polypeptide reads, in one-letter code: Acetate kinase (397 aa).

Asparagine 8 provides a ligand contact to Mg(2+). Residue lysine 15 coordinates ATP. Arginine 89 serves as a coordination point for substrate. The active-site Proton donor/acceptor is the aspartate 146. ATP-binding positions include 206 to 210 (HVGNG), 283 to 285 (DMR), and 331 to 335 (GMGEN). Position 383 (glutamate 383) interacts with Mg(2+).

Belongs to the acetokinase family. As to quaternary structure, homodimer. Mg(2+) is required as a cofactor. The cofactor is Mn(2+).

It localises to the cytoplasm. It carries out the reaction acetate + ATP = acetyl phosphate + ADP. The protein operates within metabolic intermediate biosynthesis; acetyl-CoA biosynthesis; acetyl-CoA from acetate: step 1/2. In terms of biological role, catalyzes the formation of acetyl phosphate from acetate and ATP. Can also catalyze the reverse reaction. This is Acetate kinase from Streptococcus agalactiae serotype Ia (strain ATCC 27591 / A909 / CDC SS700).